The primary structure comprises 62 residues: Large ribosomal subunit protein bL28 (62 aa).

Positions 1 to 28 are disordered; sequence MARKCVITGRKSRSGNSRSHAMNASKRT. A compositionally biased stretch (polar residues) spans 14 to 26; the sequence is SGNSRSHAMNASK.

The protein belongs to the bacterial ribosomal protein bL28 family.

The protein is Large ribosomal subunit protein bL28 of Bacillus licheniformis (strain ATCC 14580 / DSM 13 / JCM 2505 / CCUG 7422 / NBRC 12200 / NCIMB 9375 / NCTC 10341 / NRRL NRS-1264 / Gibson 46).